The primary structure comprises 501 residues: Dipeptide and tripeptide permease A (501 aa).

Residues Met-1–Arg-34 lie on the Cytoplasmic side of the membrane. The chain crosses the membrane as a helical span at residues Phe-35–Ser-55. Over Glu-56–Ser-59 the chain is Periplasmic. A helical membrane pass occupies residues Ile-60–Leu-80. Over Gly-81–Arg-89 the chain is Cytoplasmic. Residues Val-90–His-110 form a helical membrane-spanning segment. A topological domain (periplasmic) is located at residue Asp-111. Residues Val-112–Asn-132 traverse the membrane as a helical segment. Residues Pro-133 to Thr-153 are Cytoplasmic-facing. Residues Met-154 to Ala-174 traverse the membrane as a helical segment. Topologically, residues Ala-175 to Gly-178 are periplasmic. The helical transmembrane segment at Trp-179–Phe-199 threads the bilayer. Topologically, residues Cys-200–His-217 are cytoplasmic. Residues Phe-218–Leu-238 form a helical membrane-spanning segment. Residues Leu-239–Arg-246 are Periplasmic-facing. The chain crosses the membrane as a helical span at residues Met-247–Met-267. Residues Gln-268–Lys-274 are Cytoplasmic-facing. The chain crosses the membrane as a helical span at residues Met-275 to Met-295. Residues Pro-296–Gln-320 are Periplasmic-facing. The chain crosses the membrane as a helical span at residues Tyr-321 to Asn-341. Residues Lys-342 to Lys-352 are Cytoplasmic-facing. Residues Phe-353–Phe-373 form a helical membrane-spanning segment. The Periplasmic segment spans residues Ala-374–Asn-383. The chain crosses the membrane as a helical span at residues Trp-384–Leu-404. The Cytoplasmic segment spans residues Ala-405–Arg-414. A helical membrane pass occupies residues Leu-415–Gly-435. Residues Tyr-436 to Arg-459 lie on the Periplasmic side of the membrane. A helical transmembrane segment spans residues Val-460 to Pro-480. Over Lys-481–Ala-501 the chain is Cytoplasmic.

Belongs to the major facilitator superfamily. Proton-dependent oligopeptide transporter (POT/PTR) (TC 2.A.17) family. DtpA subfamily.

It is found in the cell inner membrane. In terms of biological role, proton-dependent permease that transports di- and tripeptides. The polypeptide is Dipeptide and tripeptide permease A (Citrobacter koseri (strain ATCC BAA-895 / CDC 4225-83 / SGSC4696)).